Consider the following 430-residue polypeptide: tRNA(Ile)-lysidine synthase (430 aa).

Position 21-26 (21-26 (SGGLDS)) interacts with ATP.

This sequence belongs to the tRNA(Ile)-lysidine synthase family.

It is found in the cytoplasm. The enzyme catalyses cytidine(34) in tRNA(Ile2) + L-lysine + ATP = lysidine(34) in tRNA(Ile2) + AMP + diphosphate + H(+). Ligates lysine onto the cytidine present at position 34 of the AUA codon-specific tRNA(Ile) that contains the anticodon CAU, in an ATP-dependent manner. Cytidine is converted to lysidine, thus changing the amino acid specificity of the tRNA from methionine to isoleucine. The sequence is that of tRNA(Ile)-lysidine synthase from Salmonella heidelberg (strain SL476).